The following is a 1236-amino-acid chain: MVHPVQVGKRTRMSFSKIKEVCEMSNLIEVQLDSYEWFLQEGLQEVFDDINPIQDYTGNLSLEFVGYKLDMENIKYSVEECKERDATYAAPLKVSVRLINKETGEIKEQDVFMGDFPLMTEQGTFIINGAERVIVSQLVRSPGVYYDVSLDKSGKELFSATVIPNRGAWLEYETDSNDIIYVRIDKTRKLPISILIRALEYGSDLEIIDYFGEDERLKASIEKDNTKTKEEALLEIYKRLRPGEPPTVDSAMSLIGSLFFDAKRYDLSRVGRYKFNKKLALHLRIANQISAQDIVNPATGEIVVQEGEKIDRDKAIEIQNSGINSVDIQLDDKVLRVIGNNFVDIKSFVKFDIDDLNIKEYVHYPTLKEILDNYSDEEMIKEQIKKNINVLIPKHIIRDDIMSTISYEIGLPYGIGYTDDIDHLGNRRLRSVGELLQNQFRIGLSRMERVVKERMTIQDQDSITPQALINIRPVTASIKEFFGSSQLSQFMDQTNPLSELTHKRRLSALGPGGLSRERAGFEVRDVHHSHYGRMCPIETPEGPNIGLINSLATYAKVNEYGFIETPYRKVDKATGVVTHDIIYMTADEEDHYLIAKANEILNDDGTFIDDKITVRDQEDVLVVPKEEVDFMDVSPRQLVSVATAMIPFLENDDASRALMGSNMQRQAVPLLKPEAPIVGTGIEYKAAVDSAVLPKAKKPGVVTYVSASEIRVKKDKPDSNGDVDKYKLLKFKRSNQGTCINQKPLVSKGDKVDTKTVLADGPSTDLGEIALGKNIRMGFITWEGYNYEDAMLISEELVREDVFTSIHIEEYEAEARDTKLGPEEITRDIPNVGEDALKDIDERGIIRIGAEVRSGDILVGKVTPKGETELTAEERLLRAIFGEKAREVRDTSLRVPHGEAGIIVDVKVFTRENGDELSPGVNKLVRCYIAQKRKISVGDKMAGRHGNKGVISRVLPEEDMPFLPDGRPLQICLNPLGVPSRMNIGQVLEVHLGLAASKLGWHVATPVFDGATEPEIVECLEKAGYEGDGKTVLYDGRTGEPFDNRVTVGYMYILKLAHLVDDKIHARSTGPYSLVTQQPLGGKAQFGGQRFGEMEVWALEAYGAAHTLQEILTVKSDDVVGRVKTYEAIVKGENIPEPGVPESFKVLIKELQALCLDVKVLNDDNEEIAIKELADDDMVELEVNIEGSEDYTEPKQPNDNYLEEEENKDKESDYDEDLNFDDLTKGLQLDDFNDEH.

Residues 1185–1236 are disordered; sequence IEGSEDYTEPKQPNDNYLEEEENKDKESDYDEDLNFDDLTKGLQLDDFNDEH. Over residues 1201–1220 the composition is skewed to acidic residues; that stretch reads YLEEEENKDKESDYDEDLNF.

This sequence belongs to the RNA polymerase beta chain family. The RNAP catalytic core consists of 2 alpha, 1 beta, 1 beta' and 1 omega subunit. When a sigma factor is associated with the core the holoenzyme is formed, which can initiate transcription.

The catalysed reaction is RNA(n) + a ribonucleoside 5'-triphosphate = RNA(n+1) + diphosphate. Functionally, DNA-dependent RNA polymerase catalyzes the transcription of DNA into RNA using the four ribonucleoside triphosphates as substrates. The polypeptide is DNA-directed RNA polymerase subunit beta (Clostridium tetani (strain Massachusetts / E88)).